The sequence spans 611 residues: Zinc metalloproteinase nas-31 (611 aa).

The first 17 residues, 1-17, serve as a signal peptide directing secretion; sequence MILQLLFYSLFTHLAVS. A propeptide spanning residues 18-158 is cleaved from the precursor; it reads QIDVNQALNQ…TVSTASRARR (141 aa). 2 N-linked (GlcNAc...) asparagine glycosylation sites follow: N53 and N67. Residues 82-95 show a composition bias toward polar residues; it reads NAGTNQENGATEQQ. A disordered region spans residues 82-103; it reads NAGTNQENGATEQQKPLREKPR. One can recognise a Peptidase M12A domain in the interval 159 to 354; the sequence is QAYRDRYYPS…SMMNEHYKCK (196 aa). N200 carries N-linked (GlcNAc...) asparagine glycosylation. 9 disulfide bridges follow: C203–C353, C224–C243, C357–C376, C379–C390, C397–C428, C455–C476, C532–C564, C539–C557, and C548–C561. H251 is a Zn(2+) binding site. E252 is a catalytic residue. Residues H255 and H261 each coordinate Zn(2+). The EGF-like domain occupies 340–396; that stretch reads GFYDISMMNEHYKCKELCPAASSAQCKNGGFPSPRNCAICICPSGYGGILCDQRPPG. The 120-residue stretch at 397–516 folds into the CUB domain; the sequence is CGDSVTATTT…LEYRAVTPSV (120 aa). N424 carries N-linked (GlcNAc...) asparagine glycosylation. In terms of domain architecture, ShKT spans 532–564; it reads CQDLHPNCDFYKFFGMCRSKKIRSNCKFTCHDC.

The cofactor is Zn(2+). In terms of tissue distribution, expressed in excretory cell and in amphid and phasmid sheath glia.

Its subcellular location is the secreted. In terms of biological role, metalloprotease. In Caenorhabditis elegans, this protein is Zinc metalloproteinase nas-31 (nas-31).